The primary structure comprises 546 residues: Chaperonin GroEL (546 aa).

Residues Thr30–Pro33, Lys51, Asp87–Thr91, Gly415, Asn479–Ala481, and Asp495 contribute to the ATP site. Residues Lys526 to Phe546 are disordered. The span at Ala534–Phe546 shows a compositional bias: gly residues.

It belongs to the chaperonin (HSP60) family. In terms of assembly, forms a cylinder of 14 subunits composed of two heptameric rings stacked back-to-back. Interacts with the co-chaperonin GroES.

It localises to the cytoplasm. The catalysed reaction is ATP + H2O + a folded polypeptide = ADP + phosphate + an unfolded polypeptide.. Functionally, together with its co-chaperonin GroES, plays an essential role in assisting protein folding. The GroEL-GroES system forms a nano-cage that allows encapsulation of the non-native substrate proteins and provides a physical environment optimized to promote and accelerate protein folding. This is Chaperonin GroEL from Xanthomonas euvesicatoria pv. vesicatoria (strain 85-10) (Xanthomonas campestris pv. vesicatoria).